The following is a 283-amino-acid chain: Bifunctional protein FolD (283 aa).

NADP(+)-binding positions include 166–168 (GQS), Ser-191, and Ile-232.

It belongs to the tetrahydrofolate dehydrogenase/cyclohydrolase family. Homodimer.

It carries out the reaction (6R)-5,10-methylene-5,6,7,8-tetrahydrofolate + NADP(+) = (6R)-5,10-methenyltetrahydrofolate + NADPH. It catalyses the reaction (6R)-5,10-methenyltetrahydrofolate + H2O = (6R)-10-formyltetrahydrofolate + H(+). The protein operates within one-carbon metabolism; tetrahydrofolate interconversion. Catalyzes the oxidation of 5,10-methylenetetrahydrofolate to 5,10-methenyltetrahydrofolate and then the hydrolysis of 5,10-methenyltetrahydrofolate to 10-formyltetrahydrofolate. This is Bifunctional protein FolD from Laribacter hongkongensis (strain HLHK9).